The sequence spans 511 residues: Sulfate adenylyltransferase (511 aa).

The segment at 1–167 (MPAPHGGILQ…LEAIQLPQHY (167 aa)) is N-terminal. Residues 168–393 (DYPGLRKTPA…LRESNPPRPK (226 aa)) are catalytic. Gln-195 serves as a coordination point for sulfate. ATP-binding positions include 195–198 (QTRN) and 289–292 (GRDH). Catalysis depends on residues Thr-196, Arg-197, and Asn-198. A sulfate-binding site is contributed by Arg-197. Residue Ala-293 participates in sulfate binding. Val-331 contacts ATP. The required for oligomerization; adenylyl-sulfate kinase-like stretch occupies residues 394-511 (QGFSIVLGNS…FLEDNGFFVF (118 aa)).

Belongs to the sulfate adenylyltransferase family. As to quaternary structure, homohexamer. Dimer of trimers.

The protein localises to the cytoplasm. It carries out the reaction sulfate + ATP + H(+) = adenosine 5'-phosphosulfate + diphosphate. Its pathway is sulfur metabolism; hydrogen sulfide biosynthesis; sulfite from sulfate: step 1/3. In terms of biological role, catalyzes the first intracellular reaction of sulfate assimilation, forming adenosine-5'-phosphosulfate (APS) from inorganic sulfate and ATP. Plays an important role in sulfate activation as a component of the biosynthesis pathway of sulfur-containing amino acids. The chain is Sulfate adenylyltransferase from Saccharomyces cerevisiae (strain ATCC 204508 / S288c) (Baker's yeast).